Here is a 1327-residue protein sequence, read N- to C-terminus: Kinectin (1327 aa).

Residues 1–8 (MELYESTY) are Cytoplasmic-facing. The helical; Signal-anchor for type II membrane protein transmembrane segment at 9–29 (FIVLIPSVVITVIFLFFWLFM) threads the bilayer. Topologically, residues 30–1327 (KETLYDEVLA…EVNQQLTKET (1298 aa)) are lumenal. Disordered regions lie at residues 49 to 181 (STKT…EQDK) and 197 to 216 (LSHQ…GLSK). N-linked (GlcNAc...) asparagine glycosylation is present at Asn69. Composition is skewed to basic and acidic residues over residues 73 to 86 (RESD…DFKL) and 111 to 135 (VRER…ESDA). A phosphoserine mark is found at Ser75 and Ser77. The span at 163 to 173 (LKKKAGQKKSK) shows a compositional bias: basic residues. Residues 329–1327 (ELSGLLHQLQ…EVNQQLTKET (999 aa)) adopt a coiled-coil conformation. Asn1031 carries N-linked (GlcNAc...) asparagine glycosylation. Residue Ser1060 is modified to Phosphoserine. N-linked (GlcNAc...) asparagine glycosylation is present at Asn1066. Ser1290 carries the phosphoserine modification.

This sequence belongs to the kinectin family. In terms of tissue distribution, expressed in all tissues examined including 12-day embryo, adult heart, brain, ovary, kidney, lung, small intestine, spleen, thymus and pancreas.

It localises to the endoplasmic reticulum membrane. Receptor for kinesin thus involved in kinesin-driven vesicle motility. Accumulates in integrin-based adhesion complexes (IAC) upon integrin aggregation by fibronectin. This Mus musculus (Mouse) protein is Kinectin.